Reading from the N-terminus, the 94-residue chain is Small ribosomal subunit protein bS18 (94 aa).

The protein belongs to the bacterial ribosomal protein bS18 family. In terms of assembly, part of the 30S ribosomal subunit. Forms a tight heterodimer with protein bS6.

Its function is as follows. Binds as a heterodimer with protein bS6 to the central domain of the 16S rRNA, where it helps stabilize the platform of the 30S subunit. This Albidiferax ferrireducens (strain ATCC BAA-621 / DSM 15236 / T118) (Rhodoferax ferrireducens) protein is Small ribosomal subunit protein bS18.